We begin with the raw amino-acid sequence, 209 residues long: MRYAKERHNLMVILQRHGIRNEKVLNAIASVPRELFIDEAFSHQAYENNALPIGSGQTISQPYIVGKMTELLELTAQSHVLEVGTGSGYQTAVLAQLVDHVYSVERIKALQWQAKRRLKQLNLHNISTKHGDGWKGWHNKGPFDAIIVTAAAEEMPMELLAQLTDGGRLVIPVGDDLQVLKKITRNGEQFVSQDIEAVRFVPLVAGDLA.

The active site involves Ser60.

Belongs to the methyltransferase superfamily. L-isoaspartyl/D-aspartyl protein methyltransferase family.

Its subcellular location is the cytoplasm. It catalyses the reaction [protein]-L-isoaspartate + S-adenosyl-L-methionine = [protein]-L-isoaspartate alpha-methyl ester + S-adenosyl-L-homocysteine. In terms of biological role, catalyzes the methyl esterification of L-isoaspartyl residues in peptides and proteins that result from spontaneous decomposition of normal L-aspartyl and L-asparaginyl residues. It plays a role in the repair and/or degradation of damaged proteins. This Photobacterium profundum (strain SS9) protein is Protein-L-isoaspartate O-methyltransferase.